An 83-amino-acid chain; its full sequence is ATP synthase subunit c (83 aa).

2 helical membrane passes run 10–30 (IAVA…FGLL) and 52–72 (MFIV…IALY).

Belongs to the ATPase C chain family. As to quaternary structure, F-type ATPases have 2 components, F(1) - the catalytic core - and F(0) - the membrane proton channel. F(1) has five subunits: alpha(3), beta(3), gamma(1), delta(1), epsilon(1). F(0) has three main subunits: a(1), b(2) and c(10-14). The alpha and beta chains form an alternating ring which encloses part of the gamma chain. F(1) is attached to F(0) by a central stalk formed by the gamma and epsilon chains, while a peripheral stalk is formed by the delta and b chains.

The protein localises to the cell inner membrane. F(1)F(0) ATP synthase produces ATP from ADP in the presence of a proton or sodium gradient. F-type ATPases consist of two structural domains, F(1) containing the extramembraneous catalytic core and F(0) containing the membrane proton channel, linked together by a central stalk and a peripheral stalk. During catalysis, ATP synthesis in the catalytic domain of F(1) is coupled via a rotary mechanism of the central stalk subunits to proton translocation. Its function is as follows. Key component of the F(0) channel; it plays a direct role in translocation across the membrane. A homomeric c-ring of between 10-14 subunits forms the central stalk rotor element with the F(1) delta and epsilon subunits. This Shewanella denitrificans (strain OS217 / ATCC BAA-1090 / DSM 15013) protein is ATP synthase subunit c.